The sequence spans 330 residues: DNA-directed RNA polymerase subunit alpha (330 aa).

The segment at M1–R236 is alpha N-terminal domain (alpha-NTD). The segment at F250 to D330 is alpha C-terminal domain (alpha-CTD).

This sequence belongs to the RNA polymerase alpha chain family. As to quaternary structure, homodimer. The RNAP catalytic core consists of 2 alpha, 1 beta, 1 beta' and 1 omega subunit. When a sigma factor is associated with the core the holoenzyme is formed, which can initiate transcription.

It catalyses the reaction RNA(n) + a ribonucleoside 5'-triphosphate = RNA(n+1) + diphosphate. In terms of biological role, DNA-dependent RNA polymerase catalyzes the transcription of DNA into RNA using the four ribonucleoside triphosphates as substrates. This chain is DNA-directed RNA polymerase subunit alpha, found in Vibrio atlanticus (strain LGP32) (Vibrio splendidus (strain Mel32)).